The sequence spans 155 residues: Ribosomal RNA large subunit methyltransferase H (155 aa).

S-adenosyl-L-methionine-binding positions include leucine 73, glycine 104, and 123-128 (LSPLTL).

It belongs to the RNA methyltransferase RlmH family. Homodimer.

Its subcellular location is the cytoplasm. It carries out the reaction pseudouridine(1915) in 23S rRNA + S-adenosyl-L-methionine = N(3)-methylpseudouridine(1915) in 23S rRNA + S-adenosyl-L-homocysteine + H(+). Its function is as follows. Specifically methylates the pseudouridine at position 1915 (m3Psi1915) in 23S rRNA. This Pseudomonas syringae pv. tomato (strain ATCC BAA-871 / DC3000) protein is Ribosomal RNA large subunit methyltransferase H.